A 216-amino-acid polypeptide reads, in one-letter code: Adenylate kinase (216 aa).

An ATP-binding site is contributed by 10–15; sequence GAGKGT. Residues 30–59 form an NMP region; sequence STGDMLRAAVKAETPVGLKAKAVMEAGQLV. AMP contacts are provided by residues Thr31, Arg36, 57–59, 85–88, and Gln92; these read QLV and GYPR. An LID region spans residues 126 to 164; the sequence is GRYTCATCGKGYHDKFEKPAVEGTCDKCGGHEFKRRPDD. Arg127 is a binding site for ATP. Zn(2+)-binding residues include Cys130, Cys133, Cys150, and Cys153. 2 residues coordinate AMP: Arg161 and Arg172. An ATP-binding site is contributed by Ala200.

This sequence belongs to the adenylate kinase family. Monomer.

Its subcellular location is the cytoplasm. It carries out the reaction AMP + ATP = 2 ADP. Its pathway is purine metabolism; AMP biosynthesis via salvage pathway; AMP from ADP: step 1/1. Catalyzes the reversible transfer of the terminal phosphate group between ATP and AMP. Plays an important role in cellular energy homeostasis and in adenine nucleotide metabolism. This is Adenylate kinase from Novosphingobium aromaticivorans (strain ATCC 700278 / DSM 12444 / CCUG 56034 / CIP 105152 / NBRC 16084 / F199).